The following is a 209-amino-acid chain: Orotate phosphoribosyltransferase (209 aa).

Residues Arg-96, Lys-100, His-102, and 122–130 each bind 5-phospho-alpha-D-ribose 1-diphosphate; that span reads EDLISTGGS. An orotate-binding site is contributed by Ser-126.

It belongs to the purine/pyrimidine phosphoribosyltransferase family. PyrE subfamily. As to quaternary structure, homodimer. Mg(2+) is required as a cofactor.

It carries out the reaction orotidine 5'-phosphate + diphosphate = orotate + 5-phospho-alpha-D-ribose 1-diphosphate. It functions in the pathway pyrimidine metabolism; UMP biosynthesis via de novo pathway; UMP from orotate: step 1/2. Functionally, catalyzes the transfer of a ribosyl phosphate group from 5-phosphoribose 1-diphosphate to orotate, leading to the formation of orotidine monophosphate (OMP). In Streptococcus sanguinis (strain SK36), this protein is Orotate phosphoribosyltransferase.